Reading from the N-terminus, the 331-residue chain is tRNA pseudouridine synthase B (331 aa).

Catalysis depends on Asp-51, which acts as the Nucleophile.

The protein belongs to the pseudouridine synthase TruB family. Type 1 subfamily.

The enzyme catalyses uridine(55) in tRNA = pseudouridine(55) in tRNA. In terms of biological role, responsible for synthesis of pseudouridine from uracil-55 in the psi GC loop of transfer RNAs. This chain is tRNA pseudouridine synthase B, found in Verminephrobacter eiseniae (strain EF01-2).